The chain runs to 234 residues: Protein CIST1 (234 aa).

An N-terminal signal peptide occupies residues 1 to 24 (MACPQLPPLLLLVLVVLLKAGVNY). Residues 25–180 (NTPFTDIVTS…GPRELHRNPS (156 aa)) are Extracellular-facing. Polar residues predominate over residues 41–121 (SPVSSLISSP…THPSSGSPSA (81 aa)). The disordered stretch occupies residues 41–174 (SPVSSLISSP…PAPGDTGPRE (134 aa)). Residues 122 to 140 (ELTPSSHSTLPSSESLTPH) are compositionally biased toward low complexity. Residues 141–159 (WSPTSHSPGTEPLTSTDQT) are compositionally biased toward polar residues. A helical membrane pass occupies residues 181 to 201 (VVVVVCLLVSLLLIGSVVMAV). Over 202–234 (RFCHRNESKFENLDEVSMGSVNDRLSFAHHLQE) the chain is Cytoplasmic.

It is found in the membrane. The chain is Protein CIST1 from Homo sapiens (Human).